We begin with the raw amino-acid sequence, 955 residues long: UPF0182 protein PMT_0755 (955 aa).

Helical transmembrane passes span 25–45 (LLLS…WLWF), 58–78 (WLWQ…CQLW), 107–127 (LLGC…LAWL), 146–166 (IWAL…MLGN), 178–198 (CFCF…ALAI), 214–234 (FGLG…AQLI), 264–284 (CNFL…LLWL), 313–333 (SLAS…TWIQ), and 340–360 (LIAS…APFV).

The protein belongs to the UPF0182 family.

Its subcellular location is the cell membrane. This chain is UPF0182 protein PMT_0755, found in Prochlorococcus marinus (strain MIT 9313).